We begin with the raw amino-acid sequence, 470 residues long: Sugar transporter ESL1 (470 aa).

Positions L10–L16 match the Essential for the localization to the vacuole membrane motif. The next 12 membrane-spanning stretches (helical) occupy residues I28 to C48, V68 to F88, K99 to A119, L130 to I150, G157 to I177, L186 to E206, V268 to Y288, I303 to V323, L332 to F352, I368 to I388, L404 to L424, and G430 to V450.

This sequence belongs to the major facilitator superfamily. Sugar transporter (TC 2.A.1.1) family. In terms of tissue distribution, expressed in both shoots and roots. In roots, strongly expressed in pericycle and xylem parenchyma cells, and to a lesser extent in the root endodermis. In flowers, expressed in sepals.

The protein localises to the vacuole membrane. It is found in the vesicle. Sugar transporter. Transports monosaccharides across the vacuolar membrane independently from a proton gradient. May function coordinately with the vacuolar invertase to regulate osmotic pressure by affecting the accumulation of sugar in the cells under abiotic stress conditions. The protein is Sugar transporter ESL1 of Arabidopsis thaliana (Mouse-ear cress).